The primary structure comprises 336 residues: Dihydroorotate dehydrogenase (quinone) (336 aa).

FMN is bound by residues 62–66 (AGLDK) and Thr86. Lys66 provides a ligand contact to substrate. Position 111–115 (111–115 (NRMGF)) interacts with substrate. FMN-binding residues include Asn139 and Asn172. Asn172 contacts substrate. The Nucleophile role is filled by Ser175. Asn177 is a substrate binding site. Residues Lys217 and Thr245 each coordinate FMN. 246-247 (NT) contacts substrate. FMN is bound by residues Gly268, Gly297, and 318–319 (YS).

The protein belongs to the dihydroorotate dehydrogenase family. Type 2 subfamily. As to quaternary structure, monomer. The cofactor is FMN.

The protein resides in the cell membrane. The enzyme catalyses (S)-dihydroorotate + a quinone = orotate + a quinol. The protein operates within pyrimidine metabolism; UMP biosynthesis via de novo pathway; orotate from (S)-dihydroorotate (quinone route): step 1/1. Catalyzes the conversion of dihydroorotate to orotate with quinone as electron acceptor. This chain is Dihydroorotate dehydrogenase (quinone), found in Shigella flexneri serotype 5b (strain 8401).